Reading from the N-terminus, the 133-residue chain is Small ribosomal subunit protein uS11 (133 aa).

This sequence belongs to the universal ribosomal protein uS11 family. In terms of assembly, part of the 30S ribosomal subunit. Interacts with proteins S7 and S18. Binds to IF-3.

In terms of biological role, located on the platform of the 30S subunit, it bridges several disparate RNA helices of the 16S rRNA. Forms part of the Shine-Dalgarno cleft in the 70S ribosome. The polypeptide is Small ribosomal subunit protein uS11 (Ralstonia nicotianae (strain ATCC BAA-1114 / GMI1000) (Ralstonia solanacearum)).